Consider the following 99-residue polypeptide: DNA-directed RNA polymerase subunit omega (99 aa).

The interval 55–99 (EAGTVISDPNPEEKRERLRIEREERKRQREQEQKELENRLRDEKN) is disordered. Over residues 65–99 (PEEKRERLRIEREERKRQREQEQKELENRLRDEKN) the composition is skewed to basic and acidic residues.

This sequence belongs to the RNA polymerase subunit omega family. As to quaternary structure, the RNAP catalytic core consists of 2 alpha, 1 beta, 1 beta' and 1 omega subunit. When a sigma factor is associated with the core the holoenzyme is formed, which can initiate transcription.

The enzyme catalyses RNA(n) + a ribonucleoside 5'-triphosphate = RNA(n+1) + diphosphate. Promotes RNA polymerase assembly. Latches the N- and C-terminal regions of the beta' subunit thereby facilitating its interaction with the beta and alpha subunits. The sequence is that of DNA-directed RNA polymerase subunit omega from Enterococcus faecalis (strain ATCC 700802 / V583).